Reading from the N-terminus, the 180-residue chain is uncharacterized protein (180 aa).

Residues 45-180 (FVFSQVRTLD…GNRCAFWYAN (136 aa)) form the N-acetyltransferase domain.

The protein belongs to the acetyltransferase family. Ycf52 subfamily.

This is an uncharacterized protein from Prochlorococcus marinus (strain SARG / CCMP1375 / SS120).